Here is a 357-residue protein sequence, read N- to C-terminus: Guanine nucleotide-binding protein alpha-1 subunit (357 aa).

Glycine 2 is lipidated: N-myristoyl glycine. Cysteine 4 carries S-palmitoyl cysteine lipidation. The G-alpha domain maps to asparagine 32 to phenylalanine 357. Residues lysine 35 to threonine 48 form a G1 motif region. GTP-binding residues include glutamate 43, serine 44, glycine 45, lysine 46, serine 47, threonine 48, aspartate 151, leucine 176, threonine 182, glycine 204, asparagine 270, lysine 271, aspartate 273, and alanine 329. Serine 47 contributes to the Mg(2+) binding site. Positions aspartate 174 to threonine 182 are G2 motif. Position 182 (threonine 182) interacts with Mg(2+). A G3 motif region spans residues phenylalanine 197–arginine 206. The tract at residues isoleucine 266–aspartate 273 is G4 motif. The tract at residues threonine 327–threonine 332 is G5 motif.

Belongs to the G-alpha family. G(q) subfamily. In terms of assembly, g proteins are composed of 3 units; alpha, beta and gamma. The alpha chain contains the guanine nucleotide binding site. Mg(2+) serves as cofactor.

Guanine nucleotide-binding proteins (G proteins) are involved as modulators or transducers in various transmembrane signaling systems. This is Guanine nucleotide-binding protein alpha-1 subunit (gpa-1) from Caenorhabditis briggsae.